The following is a 436-amino-acid chain: MAGGTLYTYPDNWRAYKPLIAAQYSGFPIKVASSAPEFQFGVTNKTPEFLKKFPLGKVPAFEGKDGFCLFESSAIAHYVGNDELRGTTRLHQAQVIQWVSFSDSHIVPPASAWVFPTLGIMQYNKQATEQAKEGIKTVLGVLDSHLQTRTFLVGERITLADITVTCSLLWLYKQVLEPSFRQPFGNVTRWFVTCVNQPEFRAVLGEVKLCDKMAQFDAKKFAEMQPKKETPKKEKPAKEPKKEKEEKKKAAPTPAPAPEDDLDESEKALAAEPKSKDPYAHLPKSSFIMDEFKRKYSNEDTLTVALPYFWEHFDKEGWSIWYAEYKFPEELTQAFMSCNLITGMFQRLDKLRKTGFASVILFGTNNNSSISGVWVFRGQDLAFTLSEDWQIDYESYNWRKLDSGSEECKTLVKEYFAWEGEFKNVGKPFNQGKIFK.

The 86-residue stretch at 2–87 (AGGTLYTYPD…YVGNDELRGT (86 aa)) folds into the GST N-terminal domain. The region spanning 88-221 (TRLHQAQVIQ…KMAQFDAKKF (134 aa)) is the GST C-terminal domain. Basic and acidic residues-rich tracts occupy residues 221–249 (FAEMQPKKETPKKEKPAKEPKKEKEEKKK) and 265–278 (SEKALAAEPKSKDP). The tract at residues 221–278 (FAEMQPKKETPKKEKPAKEPKKEKEEKKKAAPTPAPAPEDDLDESEKALAAEPKSKDP) is disordered. The EF-1-gamma C-terminal domain occupies 275–436 (SKDPYAHLPK…KPFNQGKIFK (162 aa)).

In terms of assembly, EF-1 is composed of four subunits: alpha, beta, delta, and gamma. Phosphorylated by CDK1. Post-translationally, the N-terminus is blocked.

Its function is as follows. Probably plays a role in anchoring the complex to other cellular components. The polypeptide is Elongation factor 1-gamma-A (eef1g-a) (Xenopus laevis (African clawed frog)).